Here is a 395-residue protein sequence, read N- to C-terminus: ADP-ribosylation factor-like protein 13A (395 aa).

GTP-binding positions include 28-35 (GLDNSGKS), 71-75 (DLTGD), and 130-133 (NKQD).

The protein belongs to the small GTPase superfamily. Arf family.

In Rattus norvegicus (Rat), this protein is ADP-ribosylation factor-like protein 13A (Arl13a).